The following is a 222-amino-acid chain: Large ribosomal subunit protein bL25 (222 aa).

This sequence belongs to the bacterial ribosomal protein bL25 family. CTC subfamily. Part of the 50S ribosomal subunit; part of the 5S rRNA/L5/L18/L25 subcomplex. Contacts the 5S rRNA. Binds to the 5S rRNA independently of L5 and L18.

This is one of the proteins that binds to the 5S RNA in the ribosome where it forms part of the central protuberance. The polypeptide is Large ribosomal subunit protein bL25 (Ruthia magnifica subsp. Calyptogena magnifica).